Here is a 682-residue protein sequence, read N- to C-terminus: Kinesin-like protein KIF2A (682 aa).

A globular region spans residues Met-1 to Asp-192. The disordered stretch occupies residues Leu-39 to Arg-129. A compositionally biased stretch (polar residues) spans Ile-99 to Ser-115. The Kinesin motor domain occupies Arg-198–Leu-528. Position 288–295 (Gly-288–Thr-295) interacts with ATP. Residues Gln-638–Gln-673 adopt a coiled-coil conformation.

Belongs to the TRAFAC class myosin-kinesin ATPase superfamily. Kinesin family. MCAK/KIF2 subfamily. As to quaternary structure, interacts with aurka and plk1. In terms of processing, phosphorylation by plk1 promotes location at spindle microtubules and spindle poles, and enhances its microtubule depolymerization activity. Phosphorylation by AURKA interferes with location at spindle microtubules and spindle poles, and inhibits its microtubule depolymerization activity.

It localises to the cytoplasm. It is found in the cytoskeleton. The protein resides in the microtubule organizing center. Its subcellular location is the centrosome. The protein localises to the spindle pole. It localises to the spindle. Plus end-directed microtubule-dependent motor. May regulate microtubule dynamics during axonal growth. Required for normal progression through mitosis. Required for normal congress of chromosomes at the metaphase plate. Required for normal spindle dynamics during mitosis. Promotes spindle turnover. Implicated in formation of bipolar mitotic spindles Has microtubule depolymerization activity. The polypeptide is Kinesin-like protein KIF2A (kif2a) (Xenopus laevis (African clawed frog)).